The chain runs to 171 residues: ATP synthase subunit b 2 (171 aa).

A helical membrane pass occupies residues 9–29; sequence APWHHPVFWVAVAFVLFFVLF.

This sequence belongs to the ATPase B chain family. In terms of assembly, F-type ATPases have 2 components, F(1) - the catalytic core - and F(0) - the membrane proton channel. F(1) has five subunits: alpha(3), beta(3), gamma(1), delta(1), epsilon(1). F(0) has three main subunits: a(1), b(2) and c(10-14). The alpha and beta chains form an alternating ring which encloses part of the gamma chain. F(1) is attached to F(0) by a central stalk formed by the gamma and epsilon chains, while a peripheral stalk is formed by the delta and b chains.

The protein localises to the cell inner membrane. In terms of biological role, f(1)F(0) ATP synthase produces ATP from ADP in the presence of a proton or sodium gradient. F-type ATPases consist of two structural domains, F(1) containing the extramembraneous catalytic core and F(0) containing the membrane proton channel, linked together by a central stalk and a peripheral stalk. During catalysis, ATP synthesis in the catalytic domain of F(1) is coupled via a rotary mechanism of the central stalk subunits to proton translocation. Component of the F(0) channel, it forms part of the peripheral stalk, linking F(1) to F(0). The protein is ATP synthase subunit b 2 of Granulibacter bethesdensis (strain ATCC BAA-1260 / CGDNIH1).